Reading from the N-terminus, the 492-residue chain is N-succinylglutamate 5-semialdehyde dehydrogenase (492 aa).

Residue Gly-220–Gly-225 coordinates NAD(+). Residues Glu-243 and Cys-277 contribute to the active site.

Belongs to the aldehyde dehydrogenase family. AstD subfamily.

It carries out the reaction N-succinyl-L-glutamate 5-semialdehyde + NAD(+) + H2O = N-succinyl-L-glutamate + NADH + 2 H(+). The protein operates within amino-acid degradation; L-arginine degradation via AST pathway; L-glutamate and succinate from L-arginine: step 4/5. Functionally, catalyzes the NAD-dependent reduction of succinylglutamate semialdehyde into succinylglutamate. The polypeptide is N-succinylglutamate 5-semialdehyde dehydrogenase (Salmonella typhi).